The chain runs to 227 residues: Esterase OVCA2 (227 aa).

A disordered region spans residues 44-68 (GPHPVPDPPGPEGARSDFGSCPPEE). Residues Ser119, Asp179, and His206 each act as charge relay system in the active site.

Belongs to the LovG family. Post-translationally, proteolytically degraded in response to RA and 4HPR treatment in a time- and dose-dependent manner in the promyelocytic leukemia cell line HL-60. As to expression, ubiquitously expressed.

It catalyses the reaction a carboxylic ester + H2O = an alcohol + a carboxylate + H(+). Its function is as follows. Exhibits ester hydrolase activity with a strong preference for long-chain alkyl ester substrates and high selectivity against a variety of short, branched, and substituted esters. Is able to hydrolyze ester bonds within a wide range of p-nitrophenyl derivatives (C2-C14) in vitro, with a strong preference toward substrates of &gt;8 carbons. The sequence is that of Esterase OVCA2 from Homo sapiens (Human).